We begin with the raw amino-acid sequence, 409 residues long: MASTAKTLQAIKFDKENISLQILDQLLLPYTTHYLDIKTIEDAFSAIRLMQVRGAPAIAIVGAFAVVVDTNASLKNGGNKTVSKLFDSIDYLETSRPTAVNLANALNDIKKLVSAKFGQNDLVDEDVYQIIYKYSVALYEDDLANNFKIGANGLNYIVETLKKDGFKGAFSIVTICNTGSLATSGHGTALGIIRSTYDKLKKSESSEEFWLDHVYPCETRPYNQGAKLTTYELHYEQIPFTLICDNMVSSLVNTLSSNKNIQDNAAAPVKFIIVGADRVVKNGDTANKIGTFQLSTIANFFNSNKLSGSANKIKFIVAAPRTTIDLNTATGDEIVIEERPANELTTLKGPVLREDGSIGDKYTVGIATPGISVWNPAFDVTPHALIDAIVTEEEKVYTKNSHGEFELSK.

Asp277 serves as the catalytic Proton donor.

It belongs to the eIF-2B alpha/beta/delta subunits family. MtnA subfamily.

The protein resides in the cytoplasm. It localises to the nucleus. It carries out the reaction 5-(methylsulfanyl)-alpha-D-ribose 1-phosphate = 5-(methylsulfanyl)-D-ribulose 1-phosphate. It participates in amino-acid biosynthesis; L-methionine biosynthesis via salvage pathway; L-methionine from S-methyl-5-thio-alpha-D-ribose 1-phosphate: step 1/6. In terms of biological role, catalyzes the interconversion of methylthioribose-1-phosphate (MTR-1-P) into methylthioribulose-1-phosphate (MTRu-1-P). The protein is Methylthioribose-1-phosphate isomerase of Scheffersomyces stipitis (strain ATCC 58785 / CBS 6054 / NBRC 10063 / NRRL Y-11545) (Yeast).